A 460-amino-acid polypeptide reads, in one-letter code: 3-isopropylmalate dehydratase large subunit (460 aa).

[4Fe-4S] cluster is bound by residues Cys-338, Cys-398, and Cys-401.

The protein belongs to the aconitase/IPM isomerase family. LeuC type 1 subfamily. As to quaternary structure, heterodimer of LeuC and LeuD. [4Fe-4S] cluster is required as a cofactor.

The catalysed reaction is (2R,3S)-3-isopropylmalate = (2S)-2-isopropylmalate. Its pathway is amino-acid biosynthesis; L-leucine biosynthesis; L-leucine from 3-methyl-2-oxobutanoate: step 2/4. Catalyzes the isomerization between 2-isopropylmalate and 3-isopropylmalate, via the formation of 2-isopropylmaleate. This Streptococcus thermophilus (strain ATCC BAA-250 / LMG 18311) protein is 3-isopropylmalate dehydratase large subunit.